The sequence spans 182 residues: uncharacterized protein (182 aa).

2 helical membrane-spanning segments follow: residues 58–78 and 81–101; these read ILFGFMIIALISFNILLYVVY and PVSITSIIAEILIIISMIIIW.

The protein to M.jannaschii MJ0803.

Its subcellular location is the cell membrane. This is an uncharacterized protein from Methanocaldococcus jannaschii (strain ATCC 43067 / DSM 2661 / JAL-1 / JCM 10045 / NBRC 100440) (Methanococcus jannaschii).